The chain runs to 1014 residues: Klotho (1014 aa).

The signal sequence occupies residues 1 to 34 (MLARAPPRRPPRLVLLRLLLLHLLLLALRARCLS). Residues 35–982 (AEPGQGAQTW…TECGFFQTRK (948 aa)) are Extracellular-facing. Glycosyl hydrolase-1 regions lie at residues 59-508 (LHDT…DNGF) and 517-955 (LEGT…SNGF). 6 N-linked (GlcNAc...) asparagine glycosylation sites follow: asparagine 161, asparagine 285, asparagine 346, asparagine 609, asparagine 614, and asparagine 696. The chain crosses the membrane as a helical span at residues 983–1003 (SLLVFISFLVFTFIISLALIF). At 1004-1014 (HYSKKGQRSYK) the chain is on the cytoplasmic side.

Belongs to the glycosyl hydrolase 1 family. Klotho subfamily. Homodimer. Interacts with FGF23 and FGFR1. N-glycosylated. Membrane-bound protein is present in distal renal tubules, inner ear, ependymal cells of brain choroid plexus, elongating spermatids and mature oocytes (at protein level). Soluble peptide is present in serum (100 pM) and cerebrospinal fluid. Expressed strongly in kidney, moderately in brain choroid plexus, and at low levels in pituitary, placenta, skeletal muscle, urinary bladder, aorta, pancreas, testis, ovary, colon, thyroid gland and adipocytes.

It localises to the cell membrane. Its subcellular location is the apical cell membrane. It is found in the secreted. It catalyses the reaction a beta-D-glucuronoside + H2O = D-glucuronate + an alcohol. Inhibited by D-saccharic acid 1,4-lactone and taurocholic acid. Functionally, may have weak glycosidase activity towards glucuronylated steroids. However, it lacks essential active site Glu residues at positions 241 and 874, suggesting it may be inactive as a glycosidase in vivo. May be involved in the regulation of calcium and phosphorus homeostasis by inhibiting the synthesis of active vitamin D. Essential factor for the specific interaction between FGF23 and FGFR1. Its function is as follows. The Klotho peptide generated by cleavage of the membrane-bound isoform may be an anti-aging circulating hormone which would extend life span by inhibiting insulin/IGF1 signaling. This Mus musculus (Mouse) protein is Klotho (Kl).